Here is a 295-residue protein sequence, read N- to C-terminus: Maintenance of mitochondrial morphology protein 1 (295 aa).

Topologically, residues 1–12 are lumenal; that stretch reads MVQLFHLTFTQG. A helical membrane pass occupies residues 13-33; sequence FFIGQLSVIVIVYIFLRFFLF. Residues 34–295 lie on the Cytoplasmic side of the membrane; it reads CTKEELKNVQ…REGHRQKSTE (262 aa). The 198-residue stretch at 81 to 278 folds into the SMP-LTD domain; that stretch reads EEESLDWFNV…SPQFQQISIP (198 aa).

The protein belongs to the MMM1 family. Homodimer. Component of the ER-mitochondria encounter structure (ERMES) or MDM complex, composed of mmm1, mdm10, mdm12 and mdm34. A mmm1 homodimer associates with one molecule of mdm12 on each side in a pairwise head-to-tail manner, and the SMP-LTD domains of mmm1 and mdm12 generate a continuous hydrophobic tunnel for phospholipid trafficking.

It localises to the endoplasmic reticulum membrane. Functionally, component of the ERMES/MDM complex, which serves as a molecular tether to connect the endoplasmic reticulum (ER) and mitochondria. Components of this complex are involved in the control of mitochondrial shape and protein biogenesis, and function in nonvesicular lipid trafficking between the ER and mitochondria. The mdm12-mmm1 subcomplex functions in the major beta-barrel assembly pathway that is responsible for biogenesis of all outer membrane beta-barrel proteins, and acts in a late step after the SAM complex. The mdm10-mdm12-mmm1 subcomplex further acts in the TOM40-specific pathway after the action of the mdm12-mmm1 complex. Essential for establishing and maintaining the structure of mitochondria and maintenance of mtDNA nucleoids. In Schizosaccharomyces japonicus (strain yFS275 / FY16936) (Fission yeast), this protein is Maintenance of mitochondrial morphology protein 1.